A 1591-amino-acid chain; its full sequence is Dicer-like protein 1 (1591 aa).

Basic and acidic residues-rich tracts occupy residues 1–20 (MEVH…RYDD) and 41–52 (SKPRKISERKRA). Residues 1–52 (MEVHDGLKSPDKAAKSRYDDDRIDQDSEDEAVRLVANPDPSKPRKISERKRA) are disordered. One can recognise a Helicase ATP-binding domain in the interval 115 to 298 (LFERAKQKNT…SYERATHELE (184 aa)). An ATP-binding site is contributed by 128 to 135 (LDTGTGKT). The DEAH box signature appears at 242 to 245 (DEAH). Residues 439 to 607 (KLIEILAECF…CLSLPKDRIM (169 aa)) enclose the Helicase C-terminal domain. Positions 639–729 (SLVVLAEFVA…KSTLAKVLPA (91 aa)) constitute a Dicer dsRNA-binding fold domain. The PAZ domain occupies 888 to 1012 (TTTDRVPYNF…LVLETLLISQ (125 aa)). 2 RNase III domains span residues 1050–1190 (IDIA…LTAQ) and 1243–1406 (CSQI…VDTG). Residues Glu-1283, Asp-1392, and Glu-1395 each coordinate Mg(2+). Residues 1440-1514 (THITSIITTQ…AKQAVAIYED (75 aa)) form the DRBM domain. Zn(2+) contacts are provided by Cys-1452, His-1485, Cys-1526, and Cys-1528.

It belongs to the helicase family. Dicer subfamily. Mg(2+) serves as cofactor. The cofactor is Mn(2+).

Its function is as follows. Dicer-like endonuclease which seems not to be involved in cleaving double-stranded RNA in the RNA interference (RNAi) pathway, contrary to its DCL2 counterpart. The chain is Dicer-like protein 1 (DCL1) from Pyricularia oryzae (strain 70-15 / ATCC MYA-4617 / FGSC 8958) (Rice blast fungus).